Consider the following 178-residue polypeptide: ATP-dependent protease subunit HslV (178 aa).

Threonine 7 is an active-site residue. Na(+) is bound by residues glycine 162, cysteine 165, and threonine 168.

It belongs to the peptidase T1B family. HslV subfamily. In terms of assembly, a double ring-shaped homohexamer of HslV is capped on each side by a ring-shaped HslU homohexamer. The assembly of the HslU/HslV complex is dependent on binding of ATP.

It is found in the cytoplasm. The enzyme catalyses ATP-dependent cleavage of peptide bonds with broad specificity.. With respect to regulation, allosterically activated by HslU binding. Protease subunit of a proteasome-like degradation complex believed to be a general protein degrading machinery. The polypeptide is ATP-dependent protease subunit HslV (Dechloromonas aromatica (strain RCB)).